A 365-amino-acid chain; its full sequence is UDP-N-acetylglucosamine--N-acetylmuramyl-(pentapeptide) pyrophosphoryl-undecaprenol N-acetylglucosamine transferase (365 aa).

UDP-N-acetyl-alpha-D-glucosamine-binding positions include 17-19 (TGG), N129, R167, S194, I250, 269-274 (ALTVSE), and Q295.

Belongs to the glycosyltransferase 28 family. MurG subfamily.

Its subcellular location is the cell inner membrane. The enzyme catalyses di-trans,octa-cis-undecaprenyl diphospho-N-acetyl-alpha-D-muramoyl-L-alanyl-D-glutamyl-meso-2,6-diaminopimeloyl-D-alanyl-D-alanine + UDP-N-acetyl-alpha-D-glucosamine = di-trans,octa-cis-undecaprenyl diphospho-[N-acetyl-alpha-D-glucosaminyl-(1-&gt;4)]-N-acetyl-alpha-D-muramoyl-L-alanyl-D-glutamyl-meso-2,6-diaminopimeloyl-D-alanyl-D-alanine + UDP + H(+). Its pathway is cell wall biogenesis; peptidoglycan biosynthesis. Cell wall formation. Catalyzes the transfer of a GlcNAc subunit on undecaprenyl-pyrophosphoryl-MurNAc-pentapeptide (lipid intermediate I) to form undecaprenyl-pyrophosphoryl-MurNAc-(pentapeptide)GlcNAc (lipid intermediate II). The polypeptide is UDP-N-acetylglucosamine--N-acetylmuramyl-(pentapeptide) pyrophosphoryl-undecaprenol N-acetylglucosamine transferase (Shewanella violacea (strain JCM 10179 / CIP 106290 / LMG 19151 / DSS12)).